The chain runs to 203 residues: Small ribosomal subunit protein uS4 (203 aa).

In terms of domain architecture, S4 RNA-binding spans Arg93–Ala173.

The protein belongs to the universal ribosomal protein uS4 family. As to quaternary structure, part of the 30S ribosomal subunit. Contacts protein S5. The interaction surface between S4 and S5 is involved in control of translational fidelity.

Functionally, one of the primary rRNA binding proteins, it binds directly to 16S rRNA where it nucleates assembly of the body of the 30S subunit. Its function is as follows. With S5 and S12 plays an important role in translational accuracy. This is Small ribosomal subunit protein uS4 from Pelodictyon phaeoclathratiforme (strain DSM 5477 / BU-1).